Here is an 892-residue protein sequence, read N- to C-terminus: DNA mismatch repair protein MutS (892 aa).

607–614 (GPNMSGKS) is a binding site for ATP. The interval 833–855 (EESQLSFFGAEQSSKKQDKPALD) is disordered. The span at 845 to 855 (SSKKQDKPALD) shows a compositional bias: basic and acidic residues.

It belongs to the DNA mismatch repair MutS family.

In terms of biological role, this protein is involved in the repair of mismatches in DNA. It is possible that it carries out the mismatch recognition step. This protein has a weak ATPase activity. This is DNA mismatch repair protein MutS from Bacillus anthracis (strain A0248).